Here is a 389-residue protein sequence, read N- to C-terminus: MAIAAIMGDVLMLMGFNKAAFGKLNSASRAALIGAVIWAVLSIVYLTIFNGWKNLFTMLPHEFFIVLLSIALPIGLTVLILMLSRIVKSVDTLKSEVTTLSRNDVSSEGSVAMLADLFREHRAAIAAQVEAQVEATTQLIRLNQEGRALAAPAQASGTDEAMTLLAQLFREHREAVAAQLEAQASATAQLVQVTRDSRDGIVDELRSQRVLSQEITQELSQITQSRTVAPAPPGLDPSQRIDRMRALAEVLGLALNDLSMTATQVLTEHLNAAHGDRDGTRKFISTLTTAYFAGDKNVFFRSLVQEAVNRSEQLRRCAEDTESVRQQISKILREAREIRSLVAACDPNDLVRIVFEDGELWALEKALAEHFLIDGSPVWTETAPDSGMD.

The Cytoplasmic segment spans residues 1–31 (MAIAAIMGDVLMLMGFNKAAFGKLNSASRAA). A helical transmembrane segment spans residues 32–52 (LIGAVIWAVLSIVYLTIFNGW). Over 53-62 (KNLFTMLPHE) the chain is Lumenal. Residues 63-83 (FFIVLLSIALPIGLTVLILML) form a helical membrane-spanning segment. The Cytoplasmic portion of the chain corresponds to 84–389 (SRIVKSVDTL…TETAPDSGMD (306 aa)).

The protein belongs to the magnetosome MamY family.

Its subcellular location is the magnetosome membrane. Functionally, causes tubulation when added to magnetosome-derived liposomes, binds liposomes; may be involved in constriction of the cell inner membrane to form mature magnetosomes. Binds preferentially to cardiolipin, a component of bacterial membranes, with very poor to no binding of other tested (phospho)lipids. Addition of cardiolipin to magnetosome-derived lipids increases tubulation. May function with MamX, MamZ amd Mms6. The protein is Liposome tubulation protein MamY of Paramagnetospirillum magneticum (strain ATCC 700264 / AMB-1) (Magnetospirillum magneticum).